Reading from the N-terminus, the 164-residue chain is Transcription factor E (164 aa).

The region spanning 5-87 (NDKVIRGYLR…LWHLDFSDIE (83 aa)) is the HTH TFE/IIEalpha-type domain.

This sequence belongs to the TFE family. As to quaternary structure, monomer. Interaction with RNA polymerase subunits RpoF and RpoE is necessary for Tfe stimulatory transcription activity. Able to interact with Tbp and RNA polymerase in the absence of DNA promoter. Interacts both with the preinitiation and elongation complexes.

In terms of biological role, transcription factor that plays a role in the activation of archaeal genes transcribed by RNA polymerase. Facilitates transcription initiation by enhancing TATA-box recognition by TATA-box-binding protein (Tbp), and transcription factor B (Tfb) and RNA polymerase recruitment. Not absolutely required for transcription in vitro, but particularly important in cases where Tbp or Tfb function is not optimal. It dynamically alters the nucleic acid-binding properties of RNA polymerases by stabilizing the initiation complex and destabilizing elongation complexes. Seems to translocate with the RNA polymerase following initiation and acts by binding to the non template strand of the transcription bubble in elongation complexes. The sequence is that of Transcription factor E from Methanosarcina mazei (strain ATCC BAA-159 / DSM 3647 / Goe1 / Go1 / JCM 11833 / OCM 88) (Methanosarcina frisia).